Consider the following 916-residue polypeptide: Protein translocase subunit SecA (916 aa).

Residues glutamine 88, 106–110 (GEGKT), and aspartate 519 each bind ATP. Positions 902, 904, 913, and 914 each coordinate Zn(2+).

The protein belongs to the SecA family. In terms of assembly, monomer and homodimer. Part of the essential Sec protein translocation apparatus which comprises SecA, SecYEG and auxiliary proteins SecDF. Other proteins may also be involved. It depends on Zn(2+) as a cofactor.

Its subcellular location is the cell inner membrane. The protein localises to the cytoplasm. It catalyses the reaction ATP + H2O + cellular proteinSide 1 = ADP + phosphate + cellular proteinSide 2.. In terms of biological role, part of the Sec protein translocase complex. Interacts with the SecYEG preprotein conducting channel. Has a central role in coupling the hydrolysis of ATP to the transfer of proteins into and across the cell membrane, serving as an ATP-driven molecular motor driving the stepwise translocation of polypeptide chains across the membrane. This Treponema pallidum (strain Nichols) protein is Protein translocase subunit SecA.